The sequence spans 627 residues: F-box only protein 21 (627 aa).

The F-box domain occupies 27-76 (PSCLVQLPGEVLEYILCSGSLTALDIGRVSSTCRRLREVCQSSGQVWKEQ).

In terms of assembly, directly interacts with SKP1 and CUL1.

In terms of biological role, substrate-recognition component of the SCF (SKP1-CUL1-F-box protein)-type E3 ubiquitin ligase complex. The sequence is that of F-box only protein 21 (Fbxo21) from Mus musculus (Mouse).